The sequence spans 711 residues: Dixin (711 aa).

A lipid anchor (N-myristoyl glycine) is attached at Leu2. Val13 is modified (phosphoserine). One can recognise a Calponin-homology (CH) domain in the interval 20-153 (EQQLQAYVAW…LVLALAAHFK (134 aa)). The tract at residues 153–326 (KPGSSRTVSQ…LEKEMEEAKK (174 aa)) is actin-binding. At Ser212 the chain carries Phosphoserine. Disordered regions lie at residues 233-258 (GQQK…AKSE), 271-298 (VIIP…PGSR), and 584-623 (TQKK…SSPA). The segment covering 237 to 254 (SPSESSCSSLTSPSPIHS) has biased composition (low complexity). Ser257 is modified (phosphoserine). Over residues 278–295 (IENRTDEPDSPSSRDWRP) the composition is skewed to basic and acidic residues. Residues 279–452 (ENRTDEPDSP…NRLLGEYKKE (174 aa)) adopt a coiled-coil conformation. Residues 597 to 623 (PRNQASSEYRASWPPNSTLPHSQSSPA) show a composition bias toward polar residues. Residues 600 to 680 (QASSEYRASW…HFKALDPEFG (81 aa)) form the DIX domain. Ser618 carries the post-translational modification Phosphoserine.

The protein belongs to the DIXDC1 family. As to quaternary structure, may bind filamentous actin. Directly interacts (via DIX domain) with DVL2 (via DIX domain). Interacts with gamma-tubulin. Interacts with the complex composed of DVL2 and Rac. Interacts with AXIN1; competes with MAP3K1. Interacts with MAP3K4 preventing MAP3K4 interaction with AXIN1. In terms of processing, phosphorylated on tyrosine and serine residues. Polyubiquitinated, leading to its proteasomal degradation. WNT3A signaling increases DIXDC1 protein levels by inhibiting its ubiquitination and subsequent degradation. As to expression, abundantly expressed in brain and testis and to a lower extent in lung, kidney, colon, ovary and urinary bladder. Expressed in brain, liver, testis and spleen (at protein level). Expressed throughout the brain with strong expression in main and accessory olfactory bulbs, cerebral cortex, piriform cortex, hippocampus, habenular nucleus, dorsal thalamus, superior and inferior colliculi and cerebellum.

Its subcellular location is the cell junction. It localises to the focal adhesion. The protein localises to the cytoplasm. It is found in the cytoskeleton. The protein resides in the stress fiber. In terms of biological role, positive effector of the Wnt signaling pathway; activates WNT3A signaling via DVL2. Regulates JNK activation by AXIN1 and DVL2. The polypeptide is Dixin (Dixdc1) (Mus musculus (Mouse)).